A 1211-amino-acid polypeptide reads, in one-letter code: DNA-directed RNA polymerase subunit beta' (1211 aa).

Zn(2+) is bound by residues C60, C62, C75, and C78. Residues D450, D452, and D454 each contribute to the Mg(2+) site. Zn(2+)-binding residues include C819, C893, C900, and C903.

It belongs to the RNA polymerase beta' chain family. In terms of assembly, the RNAP catalytic core consists of 2 alpha, 1 beta, 1 beta' and 1 omega subunit. When a sigma factor is associated with the core the holoenzyme is formed, which can initiate transcription. Requires Mg(2+) as cofactor. It depends on Zn(2+) as a cofactor.

It catalyses the reaction RNA(n) + a ribonucleoside 5'-triphosphate = RNA(n+1) + diphosphate. DNA-dependent RNA polymerase catalyzes the transcription of DNA into RNA using the four ribonucleoside triphosphates as substrates. The chain is DNA-directed RNA polymerase subunit beta' from Streptococcus equi subsp. equi (strain 4047).